A 171-amino-acid polypeptide reads, in one-letter code: Putative phosphoesterase BH1439 (171 aa).

Residue histidine 34 is the Proton donor of the active site. 2 short sequence motifs (HXTX) span residues 34–37 (HVTL) and 115–118 (HLTI). Catalysis depends on histidine 115, which acts as the Proton acceptor.

The protein belongs to the 2H phosphoesterase superfamily. YjcG family.

The chain is Putative phosphoesterase BH1439 from Halalkalibacterium halodurans (strain ATCC BAA-125 / DSM 18197 / FERM 7344 / JCM 9153 / C-125) (Bacillus halodurans).